We begin with the raw amino-acid sequence, 111 residues long: Putative G antigen family E member 3 (111 aa).

The segment at Met1–Asp67 is disordered. Polar residues predominate over residues Arg8–Val24. Thr97 carries the post-translational modification Phosphothreonine.

The protein belongs to the GAGE family.

This Homo sapiens (Human) protein is Putative G antigen family E member 3 (PAGE2B).